We begin with the raw amino-acid sequence, 579 residues long: Probable N-acetylgalactosaminyltransferase 9 (579 aa).

The Cytoplasmic portion of the chain corresponds to 1–12; sequence MLRYIIPRKKGT. A helical; Signal-anchor for type II membrane protein transmembrane segment spans residues 13–30; the sequence is FVIAAFLTVAFFCIVAYH. Residues 31-579 are Lumenal-facing; it reads RNDRRRTKFQ…KWNFIDPAKA (549 aa). Asn67 carries N-linked (GlcNAc...) asparagine glycosylation. Cystine bridges form between Cys123/Cys356, Cys347/Cys427, Cys464/Cys483, Cys507/Cys520, and Cys545/Cys562. The interval 133–243 is catalytic subdomain A; the sequence is LPKTSVIIIF…HGWLEPIVQR (111 aa). Positions 174 and 204 each coordinate substrate. A Mn(2+)-binding site is contributed by Asp227. Ser228 is a binding site for substrate. His229 provides a ligand contact to Mn(2+). A catalytic subdomain B region spans residues 302-364; it reads YIRSPTMAGG…PCSHVGHIFR (63 aa). Substrate is bound at residue Trp333. His361 lines the Mn(2+) pocket. Positions 364, 367, and 369 each coordinate substrate. Residue Asn370 is glycosylated (N-linked (GlcNAc...) asparagine). The Ricin B-type lectin domain occupies 450–574; sequence AYGALHTVVS…KDEHQKWNFI (125 aa).

Belongs to the glycosyltransferase 2 family. GalNAc-T subfamily. Requires Mn(2+) as cofactor.

The protein resides in the golgi apparatus membrane. It participates in protein modification; protein glycosylation. Probable glycopeptide transferase involved in O-linked oligosaccharide biosynthesis. Glycopeptide transferases catalyze the transfer of an N-acetyl-D-galactosamine residue to an already glycosylated peptide. In contrast to other members of the family, it does not act as a peptide transferase that transfers GalNAc onto serine or threonine residue on peptides that have been tested. Some peptide transferase activity is however not excluded, considering that its appropriate peptide substrate may remain unidentified. The polypeptide is Probable N-acetylgalactosaminyltransferase 9 (gly-9) (Caenorhabditis elegans).